The primary structure comprises 209 residues: 8-oxoguanine DNA glycosylase/AP lyase (209 aa).

Active-site residues include K132 and D150.

It belongs to the type-2 OGG1 family.

It catalyses the reaction 2'-deoxyribonucleotide-(2'-deoxyribose 5'-phosphate)-2'-deoxyribonucleotide-DNA = a 3'-end 2'-deoxyribonucleotide-(2,3-dehydro-2,3-deoxyribose 5'-phosphate)-DNA + a 5'-end 5'-phospho-2'-deoxyribonucleoside-DNA + H(+). In terms of biological role, catalyzes the excision of an oxidatively damaged form of guanine (7,8-dihydro-8-oxoguanine = 8-oxoG) from DNA. Also cleaves the DNA backbone at apurinic/apyrimidinic sites (AP sites). The polypeptide is 8-oxoguanine DNA glycosylase/AP lyase (Picrophilus torridus (strain ATCC 700027 / DSM 9790 / JCM 10055 / NBRC 100828 / KAW 2/3)).